The sequence spans 487 residues: E3 ubiquitin-protein ligase RNF8 (487 aa).

An FHA domain is found at 38 to 92 (VTVGRGFGVTYQLVSKICPLMISRNHCILKQNAEGQWTIKDNKSLNGVWLNRERL). Positions 68-72 (QNAEG) are required for interaction with PIWIL1. Disordered regions lie at residues 143 to 176 (MMEK…KSKI) and 182 to 201 (EPGQ…QPSE). A Phosphoserine modification is found at serine 157. The RING-type zinc finger occupies 405 to 443 (CIICSEYFVEAVTLNCAHSFCSYCINEWMKRKVECPICR).

The protein belongs to the RNF8 family. Homodimer. Forms a E2-E3 ubiquitin ligase complex composed of the RNF8 homodimer and a E2 heterodimer of UBE2N and UBE2V2. Interacts with class III E2s, including UBE2E1, UBE2E2, and UBE2E3 and with UBE2N. Interacts with RXRA. Interacts (via FHA domain) with phosphorylated HERC2 (via C-terminus). Interacts with PIWIL1; leading to sequester RNF8 in the cytoplasm. Interacts with WRAP53/TCAB1. In terms of processing, autoubiquitinated through 'Lys-48' and 'Lys-63' of ubiquitin. 'Lys-63' polyubiquitination is mediated by UBE2N. 'Lys-29'-type polyubiquitination is also observed, but it doesn't require its own functional RING-type zinc finger.

Its subcellular location is the nucleus. It localises to the cytoplasm. The protein resides in the midbody. The protein localises to the chromosome. It is found in the telomere. It catalyses the reaction S-ubiquitinyl-[E2 ubiquitin-conjugating enzyme]-L-cysteine + [acceptor protein]-L-lysine = [E2 ubiquitin-conjugating enzyme]-L-cysteine + N(6)-ubiquitinyl-[acceptor protein]-L-lysine.. It participates in protein modification; protein ubiquitination. In terms of biological role, E3 ubiquitin-protein ligase that plays a key role in DNA damage signaling via 2 distinct roles: by mediating the 'Lys-63'-linked ubiquitination of histones H2A and H2AX and promoting the recruitment of DNA repair proteins at double-strand breaks (DSBs) sites, and by catalyzing 'Lys-48'-linked ubiquitination to remove target proteins from DNA damage sites. Following DNA DSBs, it is recruited to the sites of damage by ATM-phosphorylated MDC1 and catalyzes the 'Lys-63'-linked ubiquitination of histones H2A and H2AX, thereby promoting the formation of TP53BP1 and BRCA1 ionizing radiation-induced foci (IRIF). Also controls the recruitment of UIMC1-BRCC3 (RAP80-BRCC36) and PAXIP1/PTIP to DNA damage sites. Promotes the recruitment of NBN to DNA damage sites by catalyzing 'Lys-6'-linked ubiquitination of NBN. Also recruited at DNA interstrand cross-links (ICLs) sites and catalyzes 'Lys-63'-linked ubiquitination of histones H2A and H2AX, leading to recruitment of FAAP20 and Fanconi anemia (FA) complex, followed by interstrand cross-link repair. H2A ubiquitination also mediates the ATM-dependent transcriptional silencing at regions flanking DSBs in cis, a mechanism to avoid collision between transcription and repair intermediates. Promotes the formation of 'Lys-63'-linked polyubiquitin chains via interactions with the specific ubiquitin-conjugating UBE2N/UBC13 and ubiquitinates non-histone substrates such as PCNA. Substrates that are polyubiquitinated at 'Lys-63' are usually not targeted for degradation. Also catalyzes the formation of 'Lys-48'-linked polyubiquitin chains via interaction with the ubiquitin-conjugating UBE2L6/UBCH8, leading to degradation of substrate proteins such as CHEK2, JMJD2A/KDM4A and KU80/XRCC5: it is still unclear how the preference toward 'Lys-48'- versus 'Lys-63'-linked ubiquitination is regulated but it could be due to RNF8 ability to interact with specific E2 specific ligases. For instance, interaction with phosphorylated HERC2 promotes the association between RNF8 and UBE2N/UBC13 and favors the specific formation of 'Lys-63'-linked ubiquitin chains. Promotes non-homologous end joining (NHEJ) by promoting the 'Lys-48'-linked ubiquitination and degradation the of KU80/XRCC5. Following DNA damage, mediates the ubiquitination and degradation of JMJD2A/KDM4A in collaboration with RNF168, leading to unmask H4K20me2 mark and promote the recruitment of TP53BP1 at DNA damage sites. Following DNA damage, mediates the ubiquitination and degradation of POLD4/p12, a subunit of DNA polymerase delta. In the absence of POLD4, DNA polymerase delta complex exhibits higher proofreading activity. In addition to its function in damage signaling, also plays a role in higher-order chromatin structure by mediating extensive chromatin decondensation. Involved in the activation of ATM by promoting histone H2B ubiquitination, which indirectly triggers histone H4 'Lys-16' acetylation (H4K16ac), establishing a chromatin environment that promotes efficient activation of ATM kinase. Required in the testis, where it plays a role in the replacement of histones during spermatogenesis. At uncapped telomeres, promotes the joining of deprotected chromosome ends by inducing H2A ubiquitination and TP53BP1 recruitment, suggesting that it may enhance cancer development by aggravating telomere-induced genome instability in case of telomeric crisis. Promotes the assembly of RAD51 at DNA DSBs in the absence of BRCA1 and TP53BP1 Also involved in class switch recombination in immune system, via its role in regulation of DSBs repair. May be required for proper exit from mitosis after spindle checkpoint activation and may regulate cytokinesis. May play a role in the regulation of RXRA-mediated transcriptional activity. Not involved in RXRA ubiquitination by UBE2E2. In Bos taurus (Bovine), this protein is E3 ubiquitin-protein ligase RNF8.